The sequence spans 72 residues: Translation initiation factor IF-1 (72 aa).

Positions 1 to 72 (MSDKSIKMQA…SNGRITYRHK (72 aa)) constitute an S1-like domain.

The protein belongs to the IF-1 family. In terms of assembly, component of the 30S ribosomal translation pre-initiation complex which assembles on the 30S ribosome in the order IF-2 and IF-3, IF-1 and N-formylmethionyl-tRNA(fMet); mRNA recruitment can occur at any time during PIC assembly.

The protein localises to the cytoplasm. In terms of biological role, one of the essential components for the initiation of protein synthesis. Stabilizes the binding of IF-2 and IF-3 on the 30S subunit to which N-formylmethionyl-tRNA(fMet) subsequently binds. Helps modulate mRNA selection, yielding the 30S pre-initiation complex (PIC). Upon addition of the 50S ribosomal subunit IF-1, IF-2 and IF-3 are released leaving the mature 70S translation initiation complex. This Mycoplasmopsis pulmonis (strain UAB CTIP) (Mycoplasma pulmonis) protein is Translation initiation factor IF-1.